An 878-amino-acid polypeptide reads, in one-letter code: F-box DNA helicase protein 1 (878 aa).

Residues 8–56 (SCKFYRLPLEIIPLICRFLSVQDIQSFIRVFPSFQTILDSSNDLFWKKK) form the F-box domain.

This sequence belongs to the helicase family. UvrD subfamily. Part of the E3 ubiquitin ligase Skp1-Cullin-1-F-box (SCF) complex. Interacts with skp1 and ssb1. Mg(2+) is required as a cofactor. The cofactor is Mn(2+).

It localises to the cytoplasm. It is found in the nucleus. The catalysed reaction is Couples ATP hydrolysis with the unwinding of duplex DNA by translocating in the 3'-5' direction.. It catalyses the reaction ATP + H2O = ADP + phosphate + H(+). Its pathway is protein modification; protein ubiquitination. Involved in ATP-dependent DNA-unwinding in a 3' to 5' direction, and ATP-ase activities stimulated by the single-stranded DNA-binding protein ssb1. Essential for viability and normal growth of stationary phase cells and in the absence of either srs2 or rqh1 DNA helicase. Involved in DNA recombination repair of strand breaks and stalled or collapsed replication forks, on the rhp51-dependent pathway: promotes rhp51 filament dissolution from stalled forks, thereby inhibiting homologous recombination and preventing excessive recombination. Ubiquitination and DNA helicase activities are essential for controlling rhp51-dependent recombination in the absence of rad22. Plays a role in the processing of toxic recombination intermediates. Promotes proper chromosome segregation. The protein is F-box DNA helicase protein 1 (fbh1) of Schizosaccharomyces pombe (strain 972 / ATCC 24843) (Fission yeast).